We begin with the raw amino-acid sequence, 620 residues long: Chaperone protein DnaK (620 aa).

Residues 579–620 (KAQKEASAGAEASEDASGPSSTGSASDDDVVDADYEVVDEDK) form a disordered region. Residues 583 to 603 (EASAGAEASEDASGPSSTGSA) are compositionally biased toward low complexity. Residues 604–620 (SDDDVVDADYEVVDEDK) show a composition bias toward acidic residues.

It belongs to the heat shock protein 70 family.

Functionally, acts as a chaperone. This chain is Chaperone protein DnaK, found in Methanococcoides burtonii (strain DSM 6242 / NBRC 107633 / OCM 468 / ACE-M).